Reading from the N-terminus, the 440-residue chain is Beta-1,3-galactosyl-O-glycosyl-glycoprotein beta-1,6-N-acetylglucosaminyltransferase 3 (440 aa).

Topologically, residues 1 to 12 (MKMTGWKKKLCR) are cytoplasmic. Residues 13-30 (GHHLWALGCYMLLAVVAL) form a helical; Signal-anchor for type II membrane protein membrane-spanning segment. The Lumenal portion of the chain corresponds to 31 to 440 (RLSLRLKCDV…RHKAIYGTEL (410 aa)). N-linked (GlcNAc...) asparagine glycans are attached at residues asparagine 72 and asparagine 108. Cystine bridges form between cysteine 73/cysteine 230, cysteine 164/cysteine 384, cysteine 185/cysteine 212, and cysteine 393/cysteine 425.

Belongs to the glycosyltransferase 14 family. In terms of processing, N-glycosylated. As to expression, primarily expressed in mucus-secreting tissues.

The protein localises to the golgi apparatus membrane. The enzyme catalyses a 3-O-[beta-D-galactosyl-(1-&gt;3)-N-acetyl-alpha-D-galactosaminyl]-L-seryl-[protein] + UDP-N-acetyl-alpha-D-glucosamine = 3-O-{beta-D-galactosyl-(1-&gt;3)-[N-acetyl-beta-D-glucosaminyl-(1-&gt;6)]-N-acetyl-alpha-D-galactosaminyl}-L-seryl-[protein] + UDP + H(+). It catalyses the reaction a 3-O-[beta-D-galactosyl-(1-&gt;3)-N-acetyl-alpha-D-galactosaminyl]-L-threonyl-[protein] + UDP-N-acetyl-alpha-D-glucosamine = a 3-O-{beta-D-galactosyl-(1-&gt;3)-[N-acetyl-beta-D-glucosaminyl-(1-&gt;6)]-N-acetyl-alpha-D-galactosaminyl}-L-threonyl-[protein] + UDP + H(+). It carries out the reaction a beta-D-Gal-(1-&gt;4)-beta-D-GlcNAc-(1-&gt;3)-beta-D-Gal-(1-&gt;4)-beta-D-GlcNAc derivative + UDP-N-acetyl-alpha-D-glucosamine = a beta-D-Gal-(1-&gt;4)-beta-D-GlcNAc-(1-&gt;3)-[beta-D-GlcNAc-(1-&gt;6)]-beta-D-Gal-(1-&gt;4)-N-acetyl-beta-D-glucosaminyl derivative + UDP + H(+). The catalysed reaction is 3-O-[N-acetyl-beta-D-glucosaminyl-(1-&gt;3)-N-acetyl-alpha-D-galactosaminyl]-L-seryl-[protein] + UDP-N-acetyl-alpha-D-glucosamine = 3-O-[N-acetyl-beta-D-glucosaminyl-(1-&gt;3)-[N-acetyl-beta-D-glucosaminyl-(1-&gt;6)]-N-acetyl-alpha-D-galactosaminyl]-L-seryl-[protein] + UDP + H(+). The enzyme catalyses a 3-O-[N-acetyl-beta-D-glucosaminyl-(1-&gt;3)-N-acetyl-alpha-D-galactosaminyl]-L-threonyl-[protein] + UDP-N-acetyl-alpha-D-glucosamine = 3-O-[N-acetyl-beta-D-glucosaminyl-(1-&gt;3)-[N-acetyl-beta-D-glucosaminyl-(1-&gt;6)]-N-acetyl-alpha-D-galactosaminyl]-L-threonyl-[protein] + UDP + H(+). Its pathway is protein modification; protein glycosylation. In terms of biological role, glycosyltransferase that can synthesize all known mucin beta 6 N-acetylglucosaminides. Mediates core 2 and core 4 O-glycan branching, 2 important steps in mucin-type biosynthesis. Also has I-branching enzyme activity by converting linear into branched poly-N-acetyllactosaminoglycans, leading to introduce the blood group I antigen during embryonic development. This Bos taurus (Bovine) protein is Beta-1,3-galactosyl-O-glycosyl-glycoprotein beta-1,6-N-acetylglucosaminyltransferase 3 (GCNT3).